Consider the following 388-residue polypeptide: Succinate--CoA ligase [ADP-forming] subunit beta (388 aa).

One can recognise an ATP-grasp domain in the interval 9–244 (KQLFAEYGLP…PSQDDPREAH (236 aa)). ATP contacts are provided by residues Lys-46, 53–55 (GRG), Glu-99, Thr-102, and Glu-107. Mg(2+) contacts are provided by Asn-199 and Asp-213. Substrate-binding positions include Asn-264 and 321 to 323 (GIV).

The protein belongs to the succinate/malate CoA ligase beta subunit family. In terms of assembly, heterotetramer of two alpha and two beta subunits. Mg(2+) is required as a cofactor.

It catalyses the reaction succinate + ATP + CoA = succinyl-CoA + ADP + phosphate. It carries out the reaction GTP + succinate + CoA = succinyl-CoA + GDP + phosphate. The protein operates within carbohydrate metabolism; tricarboxylic acid cycle; succinate from succinyl-CoA (ligase route): step 1/1. In terms of biological role, succinyl-CoA synthetase functions in the citric acid cycle (TCA), coupling the hydrolysis of succinyl-CoA to the synthesis of either ATP or GTP and thus represents the only step of substrate-level phosphorylation in the TCA. The beta subunit provides nucleotide specificity of the enzyme and binds the substrate succinate, while the binding sites for coenzyme A and phosphate are found in the alpha subunit. This Pseudomonas fluorescens (strain Pf0-1) protein is Succinate--CoA ligase [ADP-forming] subunit beta.